The sequence spans 143 residues: Hexaprenyl-diphosphate synthase small subunit ((2E,6E)-farnesyl-diphosphate specific) (143 aa).

Dimer of heterodimer or heterotetramer composed of a small (Hexs-a) and large (Hexs-B) subunit.

The enzyme catalyses 3 isopentenyl diphosphate + (2E,6E)-farnesyl diphosphate = all-trans-hexaprenyl diphosphate + 3 diphosphate. In terms of biological role, catalyzes the condensation of three molecules of isopentenyl diphosphate with farnesyl diphosphate (FPP) to yield (all-E)-hexaprenyl diphosphate (HexPP; C30), the precursor of the prenyl side chain of menaquinone-6. Large subunit Hexs-B catalyzes the condensation reaction and the final product chain length is cooperatively regulated by both the Hexs-A and Hexs-B subunits using the whole size of the hydrophobic cleft as a ruler. The protein is Hexaprenyl-diphosphate synthase small subunit ((2E,6E)-farnesyl-diphosphate specific) (hexs-a) of Micrococcus luteus (Micrococcus lysodeikticus).